A 1432-amino-acid chain; its full sequence is MGARASILSGGKLDDWEKIRLRPGGKKQYRIKHLVWASRELDRFALNPGLLESAKGCQQILVQLQPALQTGTEEIKSLYNTVATLYCVHQRIEIKDTKEALDKIEEIQNKNKQQTQKAETDKKDNSQVSQNYPIVQNLQGQPVHQALSPRTLNAWVKVIEEKAFSPEVIPMFSALSEGATPQDLNTMLNTIGGHQAAMQMLKDTINEEAAEWDRVHPVHAGPVAPGQVREPRGSDIAGTTSNLQEQIGWMTGNPPIPVGEIYKRWIILGLNKIVRMYSPVSILDIRQGPKEPFRDYVDRFFKALRAEQATQDVKNWMTDTLLVQNANPDCKTILKALGSGATLEEMMTACQGVGGPGHKARVLAEAMSQVTNTNIMMQRGNFRDHKRIVKCFNCGKQGHIAKNCRAPRKKGCWKCGKEGHQMKDCTERQANFFREDLAFQQREAREFSPEQTRANSPTSREPRVRRGDPLPETGAEGQGTVSSNFPQITLWQRPLVTIRIGGQLREALLDTGADDTVLEEIDLPGKWKPKMIGGIGGFIKVRQYNEVPIEIEGKKAIGTVLIGPTPVNIIGRNMLTQLGCTLNFPISPIETVPVKLKPGMDGPKIKQWPLTEEKIKALTQICAELEEEGKISRIGPENPYNTPVFAIKKKDSTKWRKLVDFRELNKRTQDFWEVQLGIPHPAGLKKKKSVTVLDVGDAYFSVPLYEDFRKYTAFTIPSINNETPGIRYQYNVLPQGWKGSPAIFQCSMTKILKPFRERNPEIVIYQYMDDLYVGSDLEIEQHRRKIKELREHLLKWGFYTPDKKHQKEPPFLWMGYELHPDKWTVQPIQLPEKEDWTVNDIQKLVGKLNWASQIYPGIKIKELCKLIRGAKALTDIVPLTREAELELAENKEILKEPVHGVYYDPARELIAEVQKQGLDQWTYQIYQEPFKNLKTGKYAKRRSAHTNDVKQLSQVVQKIALEAIVIWGKTPKFRLPIQKETWETWWTDYWQATWIPEWEFVNTPPLVKLWYQLEKEPIMGAETFYVDGASNRETKVGKAGYVTDKGRQKVITLTDTTNQKTELQAIYLALQDSGIEVNIVTDSQYALGIIQAQPDKSESELVNQIIEELIKKEKVYLSWVPAHKGIGGNEQVDKLVSSGIRKVLFLDGIDKAQEEHEKYHSNWRAMASDFNLPPVVAKEIVASCDKCQLKGEAMHGQVDCSPGIWQLDCTHLEGKVILVAVHVASGYIEAEVIPAETGQEAAFFILKLAGGWPVKAIHTDNGSNFTSGAVKAACWWADIKQEFGIPYNPQSQGVVESMNKELKKIIGQVREQAEHLKTAVQMAVFIHNFKRKGGIGGYSAGERIIDIIATDIQTKELQKQITKIQNFRVYYRDSRDPIWKGPAKLLWKGEGAVVIQDNSEIKVVPRRKAKIIRDYGKQMAGDDCVAGRQDED.

Glycine 2 is lipidated: N-myristoyl glycine; by host. Residues 7–31 (ILSGGKLDDWEKIRLRPGGKKQYRI) are interaction with Gp41. The interaction with host CALM1 stretch occupies residues 8 to 43 (LSGGKLDDWEKIRLRPGGKKQYRIKHLVWASRELDR). Residues 12-19 (KLDDWEKI) are interaction with host AP3D1. The tract at residues 14–33 (DDWEKIRLRPGGKKQYRIKH) is interaction with membrane phosphatidylinositol 4,5-bisphosphate and RNA. Residues 16–22 (WEKIRLR) carry the Nuclear export signal motif. The Nuclear localization signal signature appears at 26–32 (KKQYRIK). The segment at 73–77 (EEIKS) is interaction with membrane phosphatidylinositol 4,5-bisphosphate. Tyrosine 132 bears the Phosphotyrosine; by host mark. The segment at 189–227 (NTIGGHQAAMQMLKDTINEEAAEWDRVHPVHAGPVAPGQ) is interaction with human PPIA/CYPA and NUP153. The interval 277–363 (YSPVSILDIR…GGPGHKARVL (87 aa)) is dimerization/Multimerization of capsid protein p24. CCHC-type zinc fingers lie at residues 389-406 (VKCF…NCRA) and 410-427 (KGCW…DCTE). The disordered stretch occupies residues 443–482 (EAREFSPEQTRANSPTSREPRVRRGDPLPETGAEGQGTVS). Polar residues predominate over residues 449–459 (PEQTRANSPTS). Basic and acidic residues predominate over residues 460-469 (REPRVRRGDP). The dimerization of protease stretch occupies residues 486 to 490 (PQITL). A Peptidase A2 domain is found at 505–574 (REALLDTGAD…TPVNIIGRNM (70 aa)). The For protease activity; shared with dimeric partner role is filled by aspartate 510. Dimerization of protease regions lie at residues 534 to 540 (GIGGFIK) and 573 to 585 (NMLT…LNFP). Residues 628–818 (EGKISRIGPE…PPFLWMGYEL (191 aa)) form the Reverse transcriptase domain. Mg(2+) is bound by residues aspartate 694, aspartate 769, and aspartate 770. The interval 811-819 (FLWMGYELH) is RT 'primer grip'. The Tryptophan repeat motif signature appears at 982–998 (WETWWTDYWQATWIPEW). The 124-residue stretch at 1018-1141 (IMGAETFYVD…VDKLVSSGIR (124 aa)) folds into the RNase H type-1 domain. 4 residues coordinate Mg(2+): aspartate 1027, glutamate 1062, aspartate 1082, and aspartate 1133. Residues 1147-1188 (DGIDKAQEEHEKYHSNWRAMASDFNLPPVVAKEIVASCDKCQ) form an Integrase-type zinc finger. Residues histidine 1156, histidine 1160, cysteine 1184, and cysteine 1187 each contribute to the Zn(2+) site. In terms of domain architecture, Integrase catalytic spans 1198–1348 (VDCSPGIWQL…SAGERIIDII (151 aa)). Mg(2+)-binding residues include aspartate 1208, aspartate 1260, and glutamate 1296. A DNA-binding region (integrase-type) is located at residues 1367 to 1414 (FRVYYRDSRDPIWKGPAKLLWKGEGAVVIQDNSEIKVVPRRKAKIIRD).

As to quaternary structure, homotrimer; further assembles as hexamers of trimers. Interacts with gp41 (via C-terminus). Interacts with host CALM1; this interaction induces a conformational change in the Matrix protein, triggering exposure of the myristate group. Interacts with host AP3D1; this interaction allows the polyprotein trafficking to multivesicular bodies during virus assembly. Part of the pre-integration complex (PIC) which is composed of viral genome, matrix protein, Vpr and integrase. In terms of assembly, homodimer; the homodimer further multimerizes as homohexamers or homopentamers. Interacts with human PPIA/CYPA; This interaction stabilizes the capsid. Interacts with human NUP153. Interacts with host PDZD8; this interaction stabilizes the capsid. Interacts with monkey TRIM5; this interaction destabilizes the capsid. Homodimer, whose active site consists of two apposed aspartic acid residues. As to quaternary structure, heterodimer of p66 RT and p51 RT (RT p66/p51). Heterodimerization of RT is essential for DNA polymerase activity. The overall folding of the subdomains is similar in p66 RT and p51 RT but the spatial arrangements of the subdomains are dramatically different. In terms of assembly, homotetramer; may further associate as a homohexadecamer. Part of the pre-integration complex (PIC) which is composed of viral genome, matrix protein, Vpr and integrase. Interacts with human SMARCB1/INI1 and human PSIP1/LEDGF isoform 1. Interacts with human KPNA3; this interaction might play a role in nuclear import of the pre-integration complex. Interacts with human NUP153; this interaction might play a role in nuclear import of the pre-integration complex. The cofactor is Mg(2+). Specific enzymatic cleavages by the viral protease yield mature proteins. The protease is released by autocatalytic cleavage. The polyprotein is cleaved during and after budding, this process is termed maturation. Proteolytic cleavage of p66 RT removes the RNase H domain to yield the p51 RT subunit. Nucleocapsid protein p7 might be further cleaved after virus entry. Post-translationally, tyrosine phosphorylated presumably in the virion by a host kinase. Phosphorylation is apparently not a major regulator of membrane association. In terms of processing, phosphorylated possibly by host MAPK1; this phosphorylation is necessary for Pin1-mediated virion uncoating. Methylated by host PRMT6, impairing its function by reducing RNA annealing and the initiation of reverse transcription.

It is found in the host cell membrane. The protein localises to the host endosome. Its subcellular location is the host multivesicular body. The protein resides in the virion membrane. It localises to the host nucleus. It is found in the host cytoplasm. The protein localises to the virion. The enzyme catalyses Specific for a P1 residue that is hydrophobic, and P1' variable, but often Pro.. The catalysed reaction is Endohydrolysis of RNA in RNA/DNA hybrids. Three different cleavage modes: 1. sequence-specific internal cleavage of RNA. Human immunodeficiency virus type 1 and Moloney murine leukemia virus enzymes prefer to cleave the RNA strand one nucleotide away from the RNA-DNA junction. 2. RNA 5'-end directed cleavage 13-19 nucleotides from the RNA end. 3. DNA 3'-end directed cleavage 15-20 nucleotides away from the primer terminus.. It carries out the reaction 3'-end directed exonucleolytic cleavage of viral RNA-DNA hybrid.. It catalyses the reaction DNA(n) + a 2'-deoxyribonucleoside 5'-triphosphate = DNA(n+1) + diphosphate. Its activity is regulated as follows. Protease: The viral protease is inhibited by many synthetic protease inhibitors (PIs), such as amprenavir, atazanavir, indinavir, loprinavir, nelfinavir, ritonavir and saquinavir. Use of protease inhibitors in tritherapy regimens permit more ambitious therapeutic strategies. Reverse transcriptase/ribonuclease H: RT can be inhibited either by nucleoside RT inhibitors (NRTIs) or by non nucleoside RT inhibitors (NNRTIs). NRTIs act as chain terminators, whereas NNRTIs inhibit DNA polymerization by binding a small hydrophobic pocket near the RT active site and inducing an allosteric change in this region. Classical NRTIs are abacavir, adefovir (PMEA), didanosine (ddI), lamivudine (3TC), stavudine (d4T), tenofovir (PMPA), zalcitabine (ddC), and zidovudine (AZT). Classical NNRTIs are atevirdine (BHAP U-87201E), delavirdine, efavirenz (DMP-266), emivirine (I-EBU), and nevirapine (BI-RG-587). The tritherapies used as a basic effective treatment of AIDS associate two NRTIs and one NNRTI. Its function is as follows. Mediates, with Gag polyprotein, the essential events in virion assembly, including binding the plasma membrane, making the protein-protein interactions necessary to create spherical particles, recruiting the viral Env proteins, and packaging the genomic RNA via direct interactions with the RNA packaging sequence (Psi). Gag-Pol polyprotein may regulate its own translation, by the binding genomic RNA in the 5'-UTR. At low concentration, the polyprotein would promote translation, whereas at high concentration, the polyprotein would encapsidate genomic RNA and then shut off translation. Targets the polyprotein to the plasma membrane via a multipartite membrane-binding signal, that includes its myristoylated N-terminus. Matrix protein is part of the pre-integration complex. Implicated in the release from host cell mediated by Vpu. Binds to RNA. In terms of biological role, forms the conical core that encapsulates the genomic RNA-nucleocapsid complex in the virion. Most core are conical, with only 7% tubular. The core is constituted by capsid protein hexamer subunits. The core is disassembled soon after virion entry. Host restriction factors such as TRIM5-alpha or TRIMCyp bind retroviral capsids and cause premature capsid disassembly, leading to blocks in reverse transcription. Capsid restriction by TRIM5 is one of the factors which restricts HIV-1 to the human species. Host PIN1 apparently facilitates the virion uncoating. On the other hand, interactions with PDZD8 or CYPA stabilize the capsid. Functionally, encapsulates and protects viral dimeric unspliced genomic RNA (gRNA). Binds these RNAs through its zinc fingers. Acts as a nucleic acid chaperone which is involved in rearangement of nucleic acid secondary structure during gRNA retrotranscription. Also facilitates template switch leading to recombination. As part of the polyprotein, participates in gRNA dimerization, packaging, tRNA incorporation and virion assembly. Its function is as follows. Aspartyl protease that mediates proteolytic cleavages of Gag and Gag-Pol polyproteins during or shortly after the release of the virion from the plasma membrane. Cleavages take place as an ordered, step-wise cascade to yield mature proteins. This process is called maturation. Displays maximal activity during the budding process just prior to particle release from the cell. Also cleaves Nef and Vif, probably concomitantly with viral structural proteins on maturation of virus particles. Hydrolyzes host EIF4GI and PABP1 in order to shut off the capped cellular mRNA translation. The resulting inhibition of cellular protein synthesis serves to ensure maximal viral gene expression and to evade host immune response. Also mediates cleavage of host YTHDF3. Mediates cleavage of host CARD8, thereby activating the CARD8 inflammasome, leading to the clearance of latent HIV-1 in patient CD4(+) T-cells after viral reactivation; in contrast, HIV-1 can evade CARD8-sensing when its protease remains inactive in infected cells prior to viral budding. Multifunctional enzyme that converts the viral RNA genome into dsDNA in the cytoplasm, shortly after virus entry into the cell. This enzyme displays a DNA polymerase activity that can copy either DNA or RNA templates, and a ribonuclease H (RNase H) activity that cleaves the RNA strand of RNA-DNA heteroduplexes in a partially processive 3' to 5' endonucleasic mode. Conversion of viral genomic RNA into dsDNA requires many steps. A tRNA(3)-Lys binds to the primer-binding site (PBS) situated at the 5'-end of the viral RNA. RT uses the 3' end of the tRNA primer to perform a short round of RNA-dependent minus-strand DNA synthesis. The reading proceeds through the U5 region and ends after the repeated (R) region which is present at both ends of viral RNA. The portion of the RNA-DNA heteroduplex is digested by the RNase H, resulting in a ssDNA product attached to the tRNA primer. This ssDNA/tRNA hybridizes with the identical R region situated at the 3' end of viral RNA. This template exchange, known as minus-strand DNA strong stop transfer, can be either intra- or intermolecular. RT uses the 3' end of this newly synthesized short ssDNA to perform the RNA-dependent minus-strand DNA synthesis of the whole template. RNase H digests the RNA template except for two polypurine tracts (PPTs) situated at the 5'-end and near the center of the genome. It is not clear if both polymerase and RNase H activities are simultaneous. RNase H probably can proceed both in a polymerase-dependent (RNA cut into small fragments by the same RT performing DNA synthesis) and a polymerase-independent mode (cleavage of remaining RNA fragments by free RTs). Secondly, RT performs DNA-directed plus-strand DNA synthesis using the PPTs that have not been removed by RNase H as primers. PPTs and tRNA primers are then removed by RNase H. The 3' and 5' ssDNA PBS regions hybridize to form a circular dsDNA intermediate. Strand displacement synthesis by RT to the PBS and PPT ends produces a blunt ended, linear dsDNA copy of the viral genome that includes long terminal repeats (LTRs) at both ends. In terms of biological role, catalyzes viral DNA integration into the host chromosome, by performing a series of DNA cutting and joining reactions. This enzyme activity takes place after virion entry into a cell and reverse transcription of the RNA genome in dsDNA. The first step in the integration process is 3' processing. This step requires a complex comprising the viral genome, matrix protein, Vpr and integrase. This complex is called the pre-integration complex (PIC). The integrase protein removes 2 nucleotides from each 3' end of the viral DNA, leaving recessed CA OH's at the 3' ends. In the second step, the PIC enters cell nucleus. This process is mediated through integrase and Vpr proteins, and allows the virus to infect a non dividing cell. This ability to enter the nucleus is specific of lentiviruses, other retroviruses cannot and rely on cell division to access cell chromosomes. In the third step, termed strand transfer, the integrase protein joins the previously processed 3' ends to the 5' ends of strands of target cellular DNA at the site of integration. The 5'-ends are produced by integrase-catalyzed staggered cuts, 5 bp apart. A Y-shaped, gapped, recombination intermediate results, with the 5'-ends of the viral DNA strands and the 3' ends of target DNA strands remaining unjoined, flanking a gap of 5 bp. The last step is viral DNA integration into host chromosome. This involves host DNA repair synthesis in which the 5 bp gaps between the unjoined strands are filled in and then ligated. Since this process occurs at both cuts flanking the HIV genome, a 5 bp duplication of host DNA is produced at the ends of HIV-1 integration. Alternatively, Integrase may catalyze the excision of viral DNA just after strand transfer, this is termed disintegration. The chain is Gag-Pol polyprotein (gag-pol) from Homo sapiens (Human).